Reading from the N-terminus, the 512-residue chain is Mannose-1-phosphate guanylyltransferase (512 aa).

It belongs to the mannose-6-phosphate isomerase type 2 family.

It catalyses the reaction alpha-D-mannose 1-phosphate + GTP + H(+) = GDP-alpha-D-mannose + diphosphate. This Sinorhizobium fredii (strain NBRC 101917 / NGR234) protein is Mannose-1-phosphate guanylyltransferase (noeJ).